The sequence spans 492 residues: GPI alpha-1,6-mannosyltransferase 2 (492 aa).

At 1 to 13 the chain is on the cytoplasmic side; the sequence is MGLLDPSQKEVLK. A helical membrane pass occupies residues 14–34; sequence FAVSCRILTLVLQALFNIIIP. Residues 35–77 lie on the Lumenal side of the membrane; sequence DHHADAFSPPRLAPSGSVDQLVEALLGGLSRWDAEHFLFIAEH. A helical transmembrane segment spans residues 78–98; the sequence is GYLYEHNFAFFPGFPLALLMG. Topologically, residues 99 to 113 are cytoplasmic; that stretch reads TELLRPLQGLLSERS. Residues 114 to 134 traverse the membrane as a helical segment; that stretch reads CLLVSVALLNSLFSVLAAVAL. The Lumenal portion of the chain corresponds to 135 to 136; it reads HD. A helical membrane pass occupies residues 137–157; the sequence is LGCLVLHCPRQAFCAALLFCL. Residues 158-161 lie on the Cytoplasmic side of the membrane; that stretch reads SPAN. The helical transmembrane segment at 162 to 182 threads the bilayer; it reads VFLAAGYSEALFAFLTFSAMG. Over 183 to 192 the chain is Lumenal; it reads QLERGRGWAS. The helical transmembrane segment at 193–213 threads the bilayer; it reads GLLFALAAGVRSNGLVSVGFL. Residues 214–234 are Cytoplasmic-facing; the sequence is LHSQCRGFCSSLVVLDPLKGL. Residues 235–255 traverse the membrane as a helical segment; that stretch reads VKLMASLCLSVLTVSLPFALF. Residues 256–327 lie on the Lumenal side of the membrane; that stretch reads QYYAYTQFCF…RYYELRQVPN (72 aa). Residues 328 to 348 traverse the membrane as a helical segment; the sequence is FLLATPVTVLVVWATWTYVTA. At 349-378 the chain is on the cytoplasmic side; it reads HPWLCLTLGLQRTKDRESLEKPHPGFLSAK. The chain crosses the membrane as a helical span at residues 379–399; it reads VFVYLVHAAALLAFGGLCMHV. At 400-468 the chain is on the lumenal side; that stretch reads QVLTRLLGSS…NWKTCSPVTK (69 aa). A helical transmembrane segment spans residues 469–489; that stretch reads CILVYFLTYWLLGLIMHCNFL. Residues 490-492 lie on the Cytoplasmic side of the membrane; the sequence is PWT.

This sequence belongs to the PIGV family. Not N-glycosylated.

It localises to the endoplasmic reticulum membrane. It functions in the pathway glycolipid biosynthesis; glycosylphosphatidylinositol-anchor biosynthesis. Functionally, alpha-1,6-mannosyltransferase that catalyzes the transfer of the second mannose, via an alpha-1,6 bond, from a dolichol-phosphate-mannose (Dol-P-Man) to the alpha-D-Man-(1-&gt;4)-alpha-D-GlcN-(1-&gt;6)-(1-radyl,2-acyl-sn-glycero-3-phospho)-2-acyl-inositol (also termed H2) intermediate to generate an alpha-D-Man-(1-&gt;6)-alpha-D-Man-(1-&gt;4)-alpha-D-GlcN-(1-&gt;6)-(1-radyl,2-acyl-sn-glycero-3-phospho)-2-acyl-inositol (also termed H3) and participates in the seventh step of the glycosylphosphatidylinositol-anchor biosynthesis. Also transfers the second mannose on a 2-PEtn-alpha-D-Man-(1-&gt;4)-alpha-D-GlcN-(1-&gt;6)-(1-radyl,2-acyl-sn-glycero-3-phospho)-2-acyl-inositol (also termed H5). This Rattus norvegicus (Rat) protein is GPI alpha-1,6-mannosyltransferase 2.